The primary structure comprises 148 residues: SsrA-binding protein (148 aa).

This sequence belongs to the SmpB family.

It is found in the cytoplasm. In terms of biological role, required for rescue of stalled ribosomes mediated by trans-translation. Binds to transfer-messenger RNA (tmRNA), required for stable association of tmRNA with ribosomes. tmRNA and SmpB together mimic tRNA shape, replacing the anticodon stem-loop with SmpB. tmRNA is encoded by the ssrA gene; the 2 termini fold to resemble tRNA(Ala) and it encodes a 'tag peptide', a short internal open reading frame. During trans-translation Ala-aminoacylated tmRNA acts like a tRNA, entering the A-site of stalled ribosomes, displacing the stalled mRNA. The ribosome then switches to translate the ORF on the tmRNA; the nascent peptide is terminated with the 'tag peptide' encoded by the tmRNA and targeted for degradation. The ribosome is freed to recommence translation, which seems to be the essential function of trans-translation. The polypeptide is SsrA-binding protein (Ehrlichia canis (strain Jake)).